The sequence spans 425 residues: SWI/SNF and RSC complexes subunit ssr3 (425 aa).

Over residues 1–16 (MSNNSRLPENGVQSGN) the composition is skewed to polar residues. The interval 1–23 (MSNNSRLPENGVQSGNGEDAELK) is disordered. Residues 201-278 (EHPERYKLSK…PELMNRFLEP (78 aa)) form the SWIB/MDM2 domain.

The protein belongs to the SMARCD family. In terms of assembly, component of the RSC complex composed of at least arp9, arp42, rsc1, rsc4, rsc7, rsc9, rsc58, sfh1, snf21, ssr1, ssr2, ssr3 and ssr4. The complex interacts with histone and histone variant components of centromeric chromatin. Component of the SWI/SNF global transcription activator complex composed of at least arp9, arp42, snf5, snf22, snf30, sbf59, sol1, ssr1, ssr2, ssr3, ssr4 and tfg3.

It is found in the cytoplasm. The protein localises to the nucleus. Component of the chromatin structure remodeling complex (RSC), which is involved in transcription regulation and nucleosome positioning. Controls particularly membrane and organelle development genes. Part of the SWI/SNF complex, an ATP-dependent chromatin remodeling complex, required for the positive and negative regulation of gene expression of a large number of genes. It changes chromatin structure by altering DNA-histone contacts within a nucleosome, leading eventually to a change in nucleosome position, thus facilitating or repressing binding of gene-specific transcription factors. The chain is SWI/SNF and RSC complexes subunit ssr3 (ssr3) from Schizosaccharomyces pombe (strain 972 / ATCC 24843) (Fission yeast).